The chain runs to 389 residues: Succinate--CoA ligase [ADP-forming] subunit beta (389 aa).

An ATP-grasp domain is found at 9–236; sequence RDMFEAHGVP…KDAADPLEAK (228 aa). Residues lysine 45, 52–54, alanine 94, and glutamate 99 each bind ATP; that span reads GRG. Asparagine 191 and aspartate 205 together coordinate Mg(2+). Substrate contacts are provided by residues asparagine 256 and 318–320; that span reads GIT.

This sequence belongs to the succinate/malate CoA ligase beta subunit family. Heterotetramer of two alpha and two beta subunits. Mg(2+) is required as a cofactor.

The enzyme catalyses succinate + ATP + CoA = succinyl-CoA + ADP + phosphate. It catalyses the reaction GTP + succinate + CoA = succinyl-CoA + GDP + phosphate. It participates in carbohydrate metabolism; tricarboxylic acid cycle; succinate from succinyl-CoA (ligase route): step 1/1. Its function is as follows. Succinyl-CoA synthetase functions in the citric acid cycle (TCA), coupling the hydrolysis of succinyl-CoA to the synthesis of either ATP or GTP and thus represents the only step of substrate-level phosphorylation in the TCA. The beta subunit provides nucleotide specificity of the enzyme and binds the substrate succinate, while the binding sites for coenzyme A and phosphate are found in the alpha subunit. In Pseudarthrobacter chlorophenolicus (strain ATCC 700700 / DSM 12829 / CIP 107037 / JCM 12360 / KCTC 9906 / NCIMB 13794 / A6) (Arthrobacter chlorophenolicus), this protein is Succinate--CoA ligase [ADP-forming] subunit beta.